The following is a 429-amino-acid chain: Hemoglobinase (429 aa).

The signal sequence occupies residues 1-19 (MMLFSLFLISILHILLVKC). The propeptide occupies 20–31 (QLDTNYEVSDET). His-151 is a catalytic residue. Residues 288–309 (FQGSRDKSSSENDEPPMKPRHS) are disordered. Positions 292–429 (RDKSSSENDE…INEAIIKICG (138 aa)) are excised as a propeptide.

This sequence belongs to the peptidase C13 family.

The catalysed reaction is Hydrolysis of proteins and small molecule substrates at -Asn-|-Xaa- bonds.. In terms of biological role, this protease is used by the parasite for degradation of the host globin. The polypeptide is Hemoglobinase (Schistosoma mansoni (Blood fluke)).